An 83-amino-acid chain; its full sequence is DNA-directed RNA polymerase subunit Rpo5 (83 aa).

Belongs to the archaeal Rpo5/eukaryotic RPB5 RNA polymerase subunit family. Part of the RNA polymerase complex.

It localises to the cytoplasm. The enzyme catalyses RNA(n) + a ribonucleoside 5'-triphosphate = RNA(n+1) + diphosphate. DNA-dependent RNA polymerase (RNAP) catalyzes the transcription of DNA into RNA using the four ribonucleoside triphosphates as substrates. The chain is DNA-directed RNA polymerase subunit Rpo5 from Metallosphaera sedula (strain ATCC 51363 / DSM 5348 / JCM 9185 / NBRC 15509 / TH2).